The sequence spans 312 residues: Homoserine O-succinyltransferase (312 aa).

Cys142 acts as the Acyl-thioester intermediate in catalysis. Positions 163 and 192 each coordinate substrate. His235 acts as the Proton acceptor in catalysis. The active site involves Glu237. A substrate-binding site is contributed by Arg249.

It belongs to the MetA family.

The protein localises to the cytoplasm. The enzyme catalyses L-homoserine + succinyl-CoA = O-succinyl-L-homoserine + CoA. The protein operates within amino-acid biosynthesis; L-methionine biosynthesis via de novo pathway; O-succinyl-L-homoserine from L-homoserine: step 1/1. Transfers a succinyl group from succinyl-CoA to L-homoserine, forming succinyl-L-homoserine. The chain is Homoserine O-succinyltransferase from Shewanella halifaxensis (strain HAW-EB4).